A 214-amino-acid polypeptide reads, in one-letter code: RNA pyrophosphohydrolase (214 aa).

A Nudix hydrolase domain is found at 6–149 (GFRPNVGIIL…KRDVYQLALT (144 aa)). A Nudix box motif is present at residues 38–59 (GGIKYGETPMQAMYRELHEETG).

Belongs to the Nudix hydrolase family. RppH subfamily. Requires a divalent metal cation as cofactor.

Its function is as follows. Accelerates the degradation of transcripts by removing pyrophosphate from the 5'-end of triphosphorylated RNA, leading to a more labile monophosphorylated state that can stimulate subsequent ribonuclease cleavage. The sequence is that of RNA pyrophosphohydrolase from Burkholderia orbicola (strain MC0-3).